Here is a 411-residue protein sequence, read N- to C-terminus: Eukaryotic initiation factor 4A-III (411 aa).

M1 carries the post-translational modification N-acetylmethionine. A2 is subject to N-acetylalanine; in Eukaryotic initiation factor 4A-III, N-terminally processed. A phosphoserine mark is found at S10 and S12. A Glycyl lysine isopeptide (Lys-Gly) (interchain with G-Cter in SUMO2) cross-link involves residue K19. The Q motif signature appears at 38-66 (PTFDTMGLREDLLRGIYAYGFEKPSAIQQ). ATP contacts are provided by residues K60, Q65, and 85-90 (GTGKTA). Residues 69–239 (IKQIIKGRDV…NKFMTDPIRI (171 aa)) enclose the Helicase ATP-binding domain. K124 is subject to N6-acetyllysine. A Glycyl lysine isopeptide (Lys-Gly) (interchain with G-Cter in SUMO2) cross-link involves residue K152. The residue at position 163 (T163) is a Phosphothreonine. The short motif at 187 to 190 (DEAD) is the DEAD box element. K198 and K296 each carry N6-acetyllysine. The 162-residue stretch at 250–411 (GIKQFFVAVE…EMPMNVADLI (162 aa)) folds into the Helicase C-terminal domain. A Glycyl lysine isopeptide (Lys-Gly) (interchain with G-Cter in SUMO2) cross-link involves residue K314. The residue at position 321 (K321) is an N6-acetyllysine. Residues D342 and 367–371 (RSGRY) contribute to the ATP site. Glycyl lysine isopeptide (Lys-Gly) (interchain with G-Cter in SUMO2) cross-links involve residues K374 and K382.

This sequence belongs to the DEAD box helicase family. eIF4A subfamily. As to quaternary structure, identified in the spliceosome C complex. Core component of the mRNA splicing-dependent exon junction complex (EJC); the core complex contains CASC3, EIF4A3, MAGOH or MAGOHB, and RBM8A. Interacts with CASC3, MAGOH, NXF1, RBM8A and ALYREF/THOC4. Component of the ALYREF/THOC4-EJC-RNA complex; in the complex interacts with MAGOH, RBM8A and THOC4 (via the WXHD motif); these interactions are likely specific to RNA-bound EJC. May interact with NOM1. Interacts with POLDIP3. Interacts with CWC22 and PRPF19 in an RNA-independent manner. Direct interaction with CWC22 is mediated by the helicase C-terminal domain. Full interaction with CWC22 occurs only when EIF4A3 is not part of the EJC and prevents EIF4A3 binding to RNA. Identified in a complex composed of the EJC core, UPF3B and UPF2. The EJC core can also interact with UPF3A (in vitro). Interacts with NCBP3. Interacts with NRDE2. Interacts with DHX34; the interaction is RNA-independent.

It localises to the nucleus. The protein localises to the nucleus speckle. The protein resides in the cytoplasm. The enzyme catalyses ATP + H2O = ADP + phosphate + H(+). The ATPase activity is increased some 4-fold in the presence of RNA. Functionally, ATP-dependent RNA helicase. Involved in pre-mRNA splicing as component of the spliceosome. Core component of the splicing-dependent multiprotein exon junction complex (EJC) deposited at splice junctions on mRNAs. The EJC is a dynamic structure consisting of core proteins and several peripheral nuclear and cytoplasmic associated factors that join the complex only transiently either during EJC assembly or during subsequent mRNA metabolism. The EJC marks the position of the exon-exon junction in the mature mRNA for the gene expression machinery and the core components remain bound to spliced mRNAs throughout all stages of mRNA metabolism thereby influencing downstream processes including nuclear mRNA export, subcellular mRNA localization, translation efficiency and nonsense-mediated mRNA decay (NMD). Its RNA-dependent ATPase and RNA-helicase activities are induced by CASC3, but abolished in presence of the MAGOH-RBM8A heterodimer, thereby trapping the ATP-bound EJC core onto spliced mRNA in a stable conformation. The inhibition of ATPase activity by the MAGOH-RBM8A heterodimer increases the RNA-binding affinity of the EJC. Involved in translational enhancement of spliced mRNAs after formation of the 80S ribosome complex. Binds spliced mRNA in sequence-independent manner, 20-24 nucleotides upstream of mRNA exon-exon junctions. Shows higher affinity for single-stranded RNA in an ATP-bound core EJC complex than after the ATP is hydrolyzed. Involved in the splicing modulation of BCL2L1/Bcl-X (and probably other apoptotic genes); specifically inhibits formation of proapoptotic isoforms; the function is different from the established EJC assembly. Involved in craniofacial development. The polypeptide is Eukaryotic initiation factor 4A-III (Eif4a3) (Mus musculus (Mouse)).